Consider the following 329-residue polypeptide: 4-hydroxythreonine-4-phosphate dehydrogenase (329 aa).

Residues H136 and T137 each coordinate substrate. A divalent metal cation contacts are provided by H166, H211, and H266. K274, N283, and R292 together coordinate substrate.

This sequence belongs to the PdxA family. As to quaternary structure, homodimer. Requires Zn(2+) as cofactor. Mg(2+) serves as cofactor. The cofactor is Co(2+).

It is found in the cytoplasm. The enzyme catalyses 4-(phosphooxy)-L-threonine + NAD(+) = 3-amino-2-oxopropyl phosphate + CO2 + NADH. It functions in the pathway cofactor biosynthesis; pyridoxine 5'-phosphate biosynthesis; pyridoxine 5'-phosphate from D-erythrose 4-phosphate: step 4/5. Functionally, catalyzes the NAD(P)-dependent oxidation of 4-(phosphooxy)-L-threonine (HTP) into 2-amino-3-oxo-4-(phosphooxy)butyric acid which spontaneously decarboxylates to form 3-amino-2-oxopropyl phosphate (AHAP). The chain is 4-hydroxythreonine-4-phosphate dehydrogenase from Shigella boydii serotype 18 (strain CDC 3083-94 / BS512).